Consider the following 282-residue polypeptide: NFU1 iron-sulfur cluster scaffold homolog, mitochondrial (282 aa).

A mitochondrion-targeting transit peptide spans 1-27 (MSKLLSYTARIILRNSRITVRQLVRGF). Residues 178–246 (IKELLDTRIR…IPEVESVEQV (69 aa)) are nifU. [4Fe-4S] cluster-binding residues include Cys215 and Cys218. Residues 263–282 (KNLKQKEPAGAPVGIGGGPN) are disordered.

This sequence belongs to the NifU family.

The protein resides in the mitochondrion. Functionally, molecular scaffold for [Fe-S] cluster assembly of mitochondrial iron-sulfur proteins. The sequence is that of NFU1 iron-sulfur cluster scaffold homolog, mitochondrial from Drosophila persimilis (Fruit fly).